Here is a 296-residue protein sequence, read N- to C-terminus: 33 kDa chaperonin (296 aa).

Cystine bridges form between Cys-238–Cys-240 and Cys-271–Cys-274.

This sequence belongs to the HSP33 family. In terms of processing, under oxidizing conditions two disulfide bonds are formed involving the reactive cysteines. Under reducing conditions zinc is bound to the reactive cysteines and the protein is inactive.

The protein resides in the cytoplasm. Redox regulated molecular chaperone. Protects both thermally unfolding and oxidatively damaged proteins from irreversible aggregation. Plays an important role in the bacterial defense system toward oxidative stress. The polypeptide is 33 kDa chaperonin (Clostridium botulinum (strain Loch Maree / Type A3)).